Consider the following 177-residue polypeptide: Peptide methionine sulfoxide reductase MsrA (177 aa).

Residue cysteine 15 is part of the active site.

This sequence belongs to the MsrA Met sulfoxide reductase family.

The catalysed reaction is L-methionyl-[protein] + [thioredoxin]-disulfide + H2O = L-methionyl-(S)-S-oxide-[protein] + [thioredoxin]-dithiol. It carries out the reaction [thioredoxin]-disulfide + L-methionine + H2O = L-methionine (S)-S-oxide + [thioredoxin]-dithiol. In terms of biological role, has an important function as a repair enzyme for proteins that have been inactivated by oxidation. Catalyzes the reversible oxidation-reduction of methionine sulfoxide in proteins to methionine. This Listeria monocytogenes serotype 4a (strain HCC23) protein is Peptide methionine sulfoxide reductase MsrA.